The sequence spans 459 residues: Cysteine--tRNA ligase (459 aa).

Cys27 lines the Zn(2+) pocket. Positions 29 to 39 match the 'HIGH' region motif; it reads VTVYDDCHIGH. Zn(2+)-binding residues include Cys208, His233, and Glu237. Residues 265–269 carry the 'KMSKS' region motif; that stretch reads KMSKS. Lys268 lines the ATP pocket.

This sequence belongs to the class-I aminoacyl-tRNA synthetase family. In terms of assembly, monomer. Requires Zn(2+) as cofactor.

It is found in the cytoplasm. The enzyme catalyses tRNA(Cys) + L-cysteine + ATP = L-cysteinyl-tRNA(Cys) + AMP + diphosphate. This is Cysteine--tRNA ligase from Francisella tularensis subsp. novicida (strain U112).